Reading from the N-terminus, the 185-residue chain is Probable chorismate pyruvate-lyase (185 aa).

Arg75, Leu113, and Glu170 together coordinate substrate.

This sequence belongs to the UbiC family.

The protein resides in the cytoplasm. It carries out the reaction chorismate = 4-hydroxybenzoate + pyruvate. Its pathway is cofactor biosynthesis; ubiquinone biosynthesis. In terms of biological role, removes the pyruvyl group from chorismate, with concomitant aromatization of the ring, to provide 4-hydroxybenzoate (4HB) for the ubiquinone pathway. The protein is Probable chorismate pyruvate-lyase of Coxiella burnetii (strain RSA 493 / Nine Mile phase I).